The primary structure comprises 508 residues: Glycerol kinase (508 aa).

Residue threonine 15 coordinates ADP. Positions 15, 16, and 17 each coordinate ATP. Sn-glycerol 3-phosphate is bound at residue threonine 15. Arginine 19 lines the ADP pocket. Residues arginine 85, glutamate 86, tyrosine 138, and aspartate 251 each contribute to the sn-glycerol 3-phosphate site. Residues arginine 85, glutamate 86, tyrosine 138, aspartate 251, and glutamine 252 each coordinate glycerol. ADP is bound by residues threonine 273, glycine 317, and glycine 419. Residues threonine 273, glycine 317, and glycine 419 each contribute to the ATP site.

The protein belongs to the FGGY kinase family.

The catalysed reaction is glycerol + ATP = sn-glycerol 3-phosphate + ADP + H(+). The protein operates within polyol metabolism; glycerol degradation via glycerol kinase pathway; sn-glycerol 3-phosphate from glycerol: step 1/1. With respect to regulation, inhibited by fructose 1,6-bisphosphate (FBP). Key enzyme in the regulation of glycerol uptake and metabolism. Catalyzes the phosphorylation of glycerol to yield sn-glycerol 3-phosphate. This is Glycerol kinase from Mycoplasma genitalium (strain ATCC 33530 / DSM 19775 / NCTC 10195 / G37) (Mycoplasmoides genitalium).